A 623-amino-acid chain; its full sequence is EIN3-binding F-box protein 2 (623 aa).

Residues 52-106 (QTSIDVLPEECLFEILRRLPSGQERSACACVSKHWLNLLSSISRSEVNESSVQDV) enclose the F-box domain. 18 LRR repeats span residues 119-147 (GKKA…QIRG), 151-176 (ESKV…SLWN), 177-202 (LPAV…DLSR), 203-228 (CPGI…TIDS), 229-254 (CSGV…SIRS), 255-281 (CPRI…KLQM), 307-334 (LQGV…SVMS), 335-360 (CRGM…SLNK), 361-386 (CLLV…KLEE), 387-413 (CHRI…SLAN), 414-441 (CLGI…SIRC), 442-467 (CPGF…ELCG), 468-494 (LNGV…NLSE), 495-521 (CINV…NLDG), 522-547 (CKNI…DISN), 548-574 (TLVS…SIGG), 575-600 (CSSI…NIQR), and 601-623 (CGRI…DILY).

Part of a SCF (SKP1-cullin-F-box) protein ligase complex. Interacts with CUL1, SKP1A/ASK1, SKP1B/ASK2, EIN3, and EIL1. Ubiquitous.

The protein localises to the nucleus. Its pathway is protein modification; protein ubiquitination. Its function is as follows. Component of SCF(EBF1) E3 ubiquitin ligase complexes, which may mediate the ubiquitination and subsequent proteasomal degradation of target proteins (probably including EIN3 and EIL1). Regulator of the ethylene signaling cascade by modulating the stability of EIN3 and EIL1 proteins. This Arabidopsis thaliana (Mouse-ear cress) protein is EIN3-binding F-box protein 2 (EBF2).